An 864-amino-acid chain; its full sequence is Probable beta-glucosidase J (864 aa).

Residue Asp-233 is part of the active site. Residues 411-578 (TGEPGYTFRV…DTDAAIQQAV (168 aa)) enclose the PA14 domain. Residues Asn-434, Asn-447, and Asn-503 are each glycosylated (N-linked (GlcNAc...) asparagine).

The protein belongs to the glycosyl hydrolase 3 family.

It is found in the secreted. It catalyses the reaction Hydrolysis of terminal, non-reducing beta-D-glucosyl residues with release of beta-D-glucose.. It participates in glycan metabolism; cellulose degradation. In terms of biological role, beta-glucosidases are one of a number of cellulolytic enzymes involved in the degradation of cellulosic biomass. Catalyzes the last step releasing glucose from the inhibitory cellobiose. The sequence is that of Probable beta-glucosidase J (bglJ) from Neosartorya fischeri (strain ATCC 1020 / DSM 3700 / CBS 544.65 / FGSC A1164 / JCM 1740 / NRRL 181 / WB 181) (Aspergillus fischerianus).